The sequence spans 504 residues: Light-independent protochlorophyllide reductase subunit B (504 aa).

D36 is a [4Fe-4S] cluster binding site. D279 serves as the catalytic Proton donor. 414–415 lines the substrate pocket; that stretch reads GL.

The protein belongs to the ChlB/BchB/BchZ family. As to quaternary structure, protochlorophyllide reductase is composed of three subunits; BchL, BchN and BchB. Forms a heterotetramer of two BchB and two BchN subunits. Requires [4Fe-4S] cluster as cofactor.

The enzyme catalyses chlorophyllide a + oxidized 2[4Fe-4S]-[ferredoxin] + 2 ADP + 2 phosphate = protochlorophyllide a + reduced 2[4Fe-4S]-[ferredoxin] + 2 ATP + 2 H2O. It participates in porphyrin-containing compound metabolism; bacteriochlorophyll biosynthesis (light-independent). Component of the dark-operative protochlorophyllide reductase (DPOR) that uses Mg-ATP and reduced ferredoxin to reduce ring D of protochlorophyllide (Pchlide) to form chlorophyllide a (Chlide). This reaction is light-independent. The NB-protein (BchN-BchB) is the catalytic component of the complex. The protein is Light-independent protochlorophyllide reductase subunit B of Acidiphilium rubrum.